The primary structure comprises 2249 residues: Endoribonuclease Dcr-1 (2249 aa).

Residues 1–371 (MAFHWCDNNL…SPKVRRLLQT (371 aa)) form an essential for miRNA substrate recognition region. The interval 1–690 (MAFHWCDNNL…SKQPPTACDI (690 aa)) is important for interaction with loqs isoform PB (loqs-PB). The interval 1 to 761 (MAFHWCDNNL…AEIDTAHSLA (761 aa)) is helicase domain. A necessary for processing certain pre-miRNas, such as pre-let 7 and pre-bantam region spans residues 1–1042 (MAFHWCDNNL…VSLELAKERV (1042 aa)). Residue 37-44 (LGHRSSKE) participates in ATP binding. The segment at 371–491 (TLRCFKPEEV…HHRDHNDGSD (121 aa)) is dispensable for activity and substrate recognition. The segment at 436-486 (TTEDRQTNRSAARVTPTPTPAHAKPKPSSGANTAQPRTRRRVYTRRHHRDH) is disordered. A compositionally biased stretch (basic residues) spans 472-484 (RTRRRVYTRRHHR). Residues 485-648 (DHNDGSDTLC…TGDTTEADSD (164 aa)) enclose the Helicase C-terminal domain. The essential for miRNA substrate recognition stretch occupies residues 496 to 606 (LIYCNQNHTA…VQCKGRARAA (111 aa)). The segment at 617-761 (SYKSPTVGSV…AEIDTAHSLA (145 aa)) is dispensable for activity and substrate recognition. Disordered stretches follow at residues 640-665 (GDTTEADSDSDDSAMPNSSGSDPYTF) and 705-757 (LDTS…IDTA). Positions 716-726 (SMSNTSPSESS) are enriched in low complexity. One can recognise a Dicer dsRNA-binding fold domain in the interval 825–920 (AIALVNKYCA…QPIGKEGFRA (96 aa)). The interval 924–957 (DWECFELEPEDEQIVQLSDEPRPGTTKRRQYYYK) is wing domain. Residues 963–1108 (FCDCRPVAGA…WQFLELIQAN (146 aa)) form a platform domain region. A PAZ domain is found at 1100–1246 (QFLELIQANG…LVPELCTVHP (147 aa)). Residues 1147–2249 (QYFYVAEICP…KKQGLIAKKD (1103 aa)) are essential for production of mature miRNAs from pre-miRNAs. Also important for proper formation of the siRISC complex but is dispensable for biogenesis of siRNAs. A disordered region spans residues 1314 to 1351 (ESKQKESLKDDTINGKDLADVEKKPTSEETQLDKDSKD). S1423 bears the Phosphoserine mark. The disordered stretch occupies residues 1426 to 1477 (FWDVSNGESGFKGPKSSQNKQGGKGKAKGPAKPTFNYYDSDNSLGSSYDDDD). A compositionally biased stretch (low complexity) spans 1437-1446 (KGPKSSQNKQ). Over residues 1462–1471 (YYDSDNSLGS) the composition is skewed to polar residues. 2 consecutive RNase III domains span residues 1698–1919 (ITSA…IECG) and 1993–2150 (FEEF…LDSN). Mg(2+) contacts are provided by E1745 and D1749. S1877 and S1880 each carry phosphoserine. The Mg(2+) site is built by D1905, E1908, E2032, D2136, and E2139. The DRBM domain occupies 2175–2241 (VPKSPIRELL…AKCALRQLKK (67 aa)).

It belongs to the helicase family. Dicer subfamily. In terms of assembly, component of the miRNA-directed RISC loading complex (miRLC), composed of at least Dcr-1, AGO1 and loqs, which processes pre-miRNAs and loads the resulting miRNAs into the Argonaute 1 (AGO1)-containing RNA-induced silencing complex (miRISC). Interacts (via helicase domain) with dicing cofactor loqs isoform-PB (loqs-PB) (via DRBM 3 domain); this interaction enhances processing of pre-miRNAs by increasing substrate binding affinity of the dicer. Also able to interact with loqs isoforms PA and PC, however the relevance of such interactions are unclear in vivo. Different regions of the Dcr-1-loqs-PB heterodimer collaborate to recognize, bind and position the pre-miRNA for Dcr-1 mediated cleavage. In the absence of authentic miRNA substrates, the heterodimer favors a closed, catalytically incompetent, conformation, whereas binding of authentic pre-miRNA substrates stabilizes the relatively rare open, catalytically competent, conformation of the heterodimer. During substrate recognition, the Dcr-1 PAZ domain and pre-miRNA interact with the DRBM 1 domain of loqs-PB, which likely contributes to substrate recognition and stabilization. At the miRNA binding stage, the Dcr-1 DRBM domain and loqs-PB DRBM domains then bind the pre-miRNA in tandem to form a tight 'belt' around the pre-miRNA stem, the pre-miRNA loop is docked in the loop-binding region formed by DUF283, DRBM and part of the N terminus of Dcr-1, and the loqs-PB DRBM 1 and the wing domain of Dcr-1 act together to bind the 5' and 3' pre-miRNA termini within the PAZ and platform domains of Dcr-1. These interactions between the proteins and their pre-miRNA substrate stabilize a distorted form of the pre-miRNA and position the scissile phosphodiester bonds of the pre-miRNA at the RNase III catalytic cleavage sites of Dcr-1. Following Dcr-1 mediated cleavage, the miRNA duplex remains bound to loqs-PB DRBM 1, which dissociates from the Dcr-1 RNase III 1 domain but remains in contact with the PAZ and wing domains, suggesting that the heterodimer presents the mature miRNA to Ago2 for loading into the RNA-induced silencing complex (miRISC). Interacts with AGO2 and Fmr1 to form a RNA-induced silencing complex (siRISC), a ribonucleoprotein (RNP) complex involved in translation regulation; other components of the complex are RpL5, RpL11, AGO2 and Rm62. Interacts with piwi and vas; these interactions occur in the polar granules. Mg(2+) is required as a cofactor. The cofactor is Mn(2+).

The protein resides in the cytoplasm. The protein localises to the cytosol. The catalysed reaction is Endonucleolytic cleavage to 5'-phosphomonoester.. With respect to regulation, activity towards pre-miRNAs is not inhibited by inorganic phosphate. Its function is as follows. Endoribonuclease which functions in microRNA- (miRNA) gene silencing and, independently of its ribonuclease III activity, also acts in the short interfering RNA- (siRNA) gene silencing pathway. Cleaves hairpin precursor miRNAs (pre-miRNA) to generate mature miRNAs (miRNAs) that are between twenty-one to twenty-four nucleotides in length and function in RNA silencing and post-transcriptional regulation of gene expression. Also functions in miRNA loading and assembly of the Argonaute 1 (AGO1)-containing RNA-induced silencing complex (miRISC), with the miRNAs serving as a guide to direct the miRISC to complementary RNAs to degrade them or prevent their translation. Independently of its catalytic activity, functions in the siRNA silencing pathway by promoting assembly of the siRNA-directed Argonaute 2 (AGO2)-containing RISC (siRISC). Required for the proper formation of a stable intermediate (R2) in siRISC assembly, which is formed from the R1 precursor complex (containing Dcr-2, R2D2 and the siRNA) and is used for assembly of the mature (R3) siRISC complex. It is not required for siRNA biogenesis. During embryogenesis, involved in germline fate determination. Post-transcriptionally regulates mei-P26 expression through the microRNA pathway, which in turn post-translationally regulates myc protein levels; involved in regulating cell and tissue growth. In Drosophila melanogaster (Fruit fly), this protein is Endoribonuclease Dcr-1.